The following is a 364-amino-acid chain: Probable dual-specificity RNA methyltransferase RlmN (364 aa).

Glu107 acts as the Proton acceptor in catalysis. Residues 113–346 (HNYGNSVCVT…VTIRREHGHD (234 aa)) form the Radical SAM core domain. Cys120 and Cys351 are joined by a disulfide. Cys127, Cys131, and Cys134 together coordinate [4Fe-4S] cluster. S-adenosyl-L-methionine contacts are provided by residues 177–178 (GE), Ser209, 232–234 (SLH), and Asn308. Residue Cys351 is the S-methylcysteine intermediate of the active site.

The protein belongs to the radical SAM superfamily. RlmN family. [4Fe-4S] cluster is required as a cofactor.

The protein resides in the cytoplasm. It carries out the reaction adenosine(2503) in 23S rRNA + 2 reduced [2Fe-2S]-[ferredoxin] + 2 S-adenosyl-L-methionine = 2-methyladenosine(2503) in 23S rRNA + 5'-deoxyadenosine + L-methionine + 2 oxidized [2Fe-2S]-[ferredoxin] + S-adenosyl-L-homocysteine. The enzyme catalyses adenosine(37) in tRNA + 2 reduced [2Fe-2S]-[ferredoxin] + 2 S-adenosyl-L-methionine = 2-methyladenosine(37) in tRNA + 5'-deoxyadenosine + L-methionine + 2 oxidized [2Fe-2S]-[ferredoxin] + S-adenosyl-L-homocysteine. Specifically methylates position 2 of adenine 2503 in 23S rRNA and position 2 of adenine 37 in tRNAs. This is Probable dual-specificity RNA methyltransferase RlmN from Geobacillus thermodenitrificans (strain NG80-2).